A 704-amino-acid chain; its full sequence is Phytyl ester synthase 1, chloroplastic (704 aa).

The transit peptide at 1–27 (MATCSSSLLVLPNLRLSSNQRRNFKVR) directs the protein to the chloroplast.

The protein belongs to the diacylglycerol acyltransferase family. In terms of assembly, interacts with PGM48. Mostly expressed in flowers (e.g. sepals, petals and stamen).

It is found in the plastid. Its subcellular location is the chloroplast. The protein localises to the plastoglobule. The catalysed reaction is a 1,2-diacyl-3-O-(beta-D-galactosyl)-sn-glycerol + a 1,2-diacylglycerol = an acyl-3-O-(beta-D-galactosyl)-sn-glycerol + a triacylglycerol. It catalyses the reaction a 1,2-diacylglycerol + a fatty acyl-CoA = a triacylglycerol + CoA. It carries out the reaction a fatty acyl-[ACP] + a 1,2-diacylglycerol = a triacylglycerol + holo-[ACP]. The enzyme catalyses phytol + a fatty acyl-CoA = a fatty acid phytyl ester + CoA. The catalysed reaction is phytol + tetradecanoyl-CoA = tetradecanoate phytyl ester + CoA. It catalyses the reaction a 1,3-diacylglycerol + a fatty acyl-CoA = a triacylglycerol + CoA. It carries out the reaction 1,2-dihexanoylglycerol + tetradecanoyl-CoA = 1,2-dihexanoyl-3-tetradecanoylglycerol + CoA. The enzyme catalyses 1,2-dihexanoylglycerol + hexadecanoyl-CoA = 1,2-dihexanoyl-3-hexadecanoylglycerol + CoA. The catalysed reaction is 1,2-dihexanoylglycerol + octadecanoyl-CoA = 1,2-dihexanoyl-3-octadecanoylglycerol + CoA. It catalyses the reaction (7Z,10Z,13Z)-hexadecatrienoyl-CoA + 1,2-dihexanoylglycerol = 1,2-dihexanoyl-3-(7Z,10Z,13Z-hexadecatrienoyl)-glycerol + CoA. It carries out the reaction 1,2-dihexanoylglycerol + (9Z)-octadecenoyl-CoA = 1,2-dihexanoyl-3-(9Z-octadecenoyl)-glycerol + CoA. The enzyme catalyses 1,2-dihexanoylglycerol + (9Z,12Z,15Z)-octadecatrienoyl-CoA = 1,2-dihexanoyl-3-(9Z,12Z,15Z-octadecatrienoyl)-glycerol + CoA. The catalysed reaction is phytol + decanoyl-CoA = decanoate phytyl ester + CoA. It catalyses the reaction (7Z,10Z,13Z)-hexadecatrienoyl-CoA + phytol = (7Z,10Z,13Z)-hexadecatrienoate phytyl ester + CoA. It carries out the reaction phytol + dodecanoyl-CoA = dodecanoate phytyl ester + CoA. Acyltransferase involved in fatty acid phytyl ester synthesis in chloroplasts, a process required for the maintenance of the photosynthetic membrane integrity during abiotic stress and senescence. Exhibits phytyl ester synthesis and diacylglycerol acyltransferase activities with broad substrate specificities, and can employ acyl-CoAs, acyl carrier proteins, and galactolipids as acyl donors. This is Phytyl ester synthase 1, chloroplastic from Arabidopsis thaliana (Mouse-ear cress).